The chain runs to 769 residues: Portal protein (769 aa).

Positions 458–479 are putative leucine zipper motif; sequence LEGYVNNLFKTIEGLKDVNSDL. Disordered stretches follow at residues 654 to 675 and 750 to 769; these read RGPR…DDER and RQLT…DRRS. Over residues 760 to 769 the composition is skewed to basic and acidic residues; that stretch reads VGCERRDRRS.

This sequence belongs to the herpesviridae portal protein family. Homododecamerizes. Interacts with terminase subunits TRM1 and TRM3.

It is found in the virion. The protein localises to the host nucleus. In terms of biological role, forms a portal in the viral capsid through which viral DNA is translocated during DNA packaging. Assembles as a dodecamer at a single fivefold axe of the T=16 icosahedric capsid. Binds to the molecular motor that translocates the viral DNA, termed terminase. The chain is Portal protein (54) from Homo sapiens (Human).